Here is a 204-residue protein sequence, read N- to C-terminus: Sperm acrosome developmental regulator (204 aa).

Residue S65 is modified to Phosphoserine. Over residues 172-184 (RRQERRRRHHLRA) the composition is skewed to basic residues. The segment at 172–204 (RRQERRRRHHLRAHMGPQPDPAQGLKQDARSPL) is disordered.

Its subcellular location is the cytoplasmic vesicle. The protein localises to the secretory vesicle. It localises to the acrosome. May play an important role in acrosome formation and nucleus shaping during spermiogenesis. This is Sperm acrosome developmental regulator (SPACDR) from Bos taurus (Bovine).